A 309-amino-acid chain; its full sequence is MGINSYVSRPKGITNSNMTKMFQTIGLIGKPHHQGTNLTLTRLHHWLSMQGFKVIVEGRVSAELGADVCSMDLLEMGEHCDLAIVVGGDGNMLGAARVLARFNVAVIGVNRGNLGFLTDLPPDNFEEALSKVLSGEFETEHRFLLEAEVHRHGKITASNTAVNEAVLHPGKIAHMIQFEVYIDEQFMYSQRADGMIVSTPTGSTAYSLSAGGSILTPNLQALILVPMFPHTLSCRPIVVDACSTIKLVVSPENGENLEVSCDGHVHLAVLPGDEIFIRRSNERLRLIHPKGHNYFHVLRNKLGWGSKLF.

Asp-89 acts as the Proton acceptor in catalysis. Residues 89–90 (DG), 163–164 (NE), His-174, Arg-191, Asp-193, and 204–209 (TAYSLS) each bind NAD(+).

The protein belongs to the NAD kinase family. A divalent metal cation serves as cofactor.

It is found in the cytoplasm. It carries out the reaction NAD(+) + ATP = ADP + NADP(+) + H(+). Its function is as follows. Involved in the regulation of the intracellular balance of NAD and NADP, and is a key enzyme in the biosynthesis of NADP. Catalyzes specifically the phosphorylation on 2'-hydroxyl of the adenosine moiety of NAD to yield NADP. This chain is NAD kinase, found in Shewanella frigidimarina (strain NCIMB 400).